A 227-amino-acid chain; its full sequence is Arginine ABC transporter permease protein ArtM (227 aa).

One can recognise an ABC transmembrane type-1 domain in the interval 13–209; it reads IPTSLLLTVV…IITGIATLLL (197 aa). 5 helical membrane-spanning segments follow: residues 17 to 37, 51 to 71, 78 to 98, 155 to 175, and 188 to 208; these read LLLT…LTFL, LYLT…IYAG, IIDS…ALAL, IILV…DIMG, and LTIY…ATLL.

It belongs to the binding-protein-dependent transport system permease family. HisMQ subfamily. The complex is composed of two ATP-binding proteins (ArtP), two transmembrane proteins (ArtM and ArtQ) and a solute-binding protein (ArtI).

It localises to the cell inner membrane. Part of the ABC transporter complex ArtPIQM involved in arginine transport. Probably responsible for the translocation of the substrate across the membrane. The chain is Arginine ABC transporter permease protein ArtM (artM) from Haemophilus influenzae (strain ATCC 51907 / DSM 11121 / KW20 / Rd).